Consider the following 160-residue polypeptide: uncharacterized protein (160 aa).

It to A.fulgidus AF1717.

This is an uncharacterized protein from Bacillus subtilis (strain 168).